The following is a 1538-amino-acid chain: Pentafunctional AROM polypeptide (1538 aa).

Residues 1-384 (MGVPTKISIL…HEPRASTVSN (384 aa)) form a 3-dehydroquinate synthase region. NAD(+) contacts are provided by residues 44 to 46 (DTN), 81 to 84 (ESSK), 114 to 116 (GGV), and Asp-119. Arg-130 contributes to the 7-phospho-2-dehydro-3-deoxy-D-arabino-heptonate binding site. 139-140 (TT) contacts NAD(+). 7-phospho-2-dehydro-3-deoxy-D-arabino-heptonate is bound by residues Asp-146 and Lys-152. Lys-161 is an NAD(+) binding site. Asn-162 provides a ligand contact to 7-phospho-2-dehydro-3-deoxy-D-arabino-heptonate. NAD(+) is bound by residues 179 to 182 (FLNT) and Asn-190. Glu-194 provides a ligand contact to Zn(2+). 7-phospho-2-dehydro-3-deoxy-D-arabino-heptonate contacts are provided by residues 194–197 (EVIK) and Lys-250. Residue Glu-260 is the Proton acceptor; for 3-dehydroquinate synthase activity of the active site. Residues 264-268 (RNLLN) and His-271 each bind 7-phospho-2-dehydro-3-deoxy-D-arabino-heptonate. His-271 provides a ligand contact to Zn(2+). The active-site Proton acceptor; for 3-dehydroquinate synthase activity is the His-275. 7-phospho-2-dehydro-3-deoxy-D-arabino-heptonate is bound by residues His-287 and Lys-356. Position 287 (His-287) interacts with Zn(2+). Positions 397 to 842 (VSPGVPKGLD…WDCLSQTFKV (446 aa)) are EPSP synthase. Residue Cys-824 is the For EPSP synthase activity of the active site. The tract at residues 866–973 (ASIFIIGMRG…RRKQNTFFVS (108 aa)) is shikimate kinase. 872-879 (GMRGAGKT) lines the ATP pocket. A 3-dehydroquinase region spans residues 974-1194 (LTLPDLGLAA…AAPGQLSARE (221 aa)). The active-site Proton acceptor; for 3-dehydroquinate dehydratase activity is the His-1097. Residue Lys-1125 is the Schiff-base intermediate with substrate; for 3-dehydroquinate dehydratase activity of the active site. The interval 1207–1538 (AKKFAVIGNP…YEHPVLNHSS (332 aa)) is shikimate dehydrogenase.

It in the N-terminal section; belongs to the sugar phosphate cyclases superfamily. Dehydroquinate synthase family. The protein in the 2nd section; belongs to the EPSP synthase family. In the 3rd section; belongs to the shikimate kinase family. This sequence in the 4th section; belongs to the type-I 3-dehydroquinase family. It in the C-terminal section; belongs to the shikimate dehydrogenase family. In terms of assembly, homodimer. Requires Zn(2+) as cofactor.

It is found in the cytoplasm. The catalysed reaction is 7-phospho-2-dehydro-3-deoxy-D-arabino-heptonate = 3-dehydroquinate + phosphate. The enzyme catalyses 3-dehydroquinate = 3-dehydroshikimate + H2O. It catalyses the reaction shikimate + NADP(+) = 3-dehydroshikimate + NADPH + H(+). It carries out the reaction shikimate + ATP = 3-phosphoshikimate + ADP + H(+). The catalysed reaction is 3-phosphoshikimate + phosphoenolpyruvate = 5-O-(1-carboxyvinyl)-3-phosphoshikimate + phosphate. Its pathway is metabolic intermediate biosynthesis; chorismate biosynthesis; chorismate from D-erythrose 4-phosphate and phosphoenolpyruvate: step 2/7. The protein operates within metabolic intermediate biosynthesis; chorismate biosynthesis; chorismate from D-erythrose 4-phosphate and phosphoenolpyruvate: step 3/7. It participates in metabolic intermediate biosynthesis; chorismate biosynthesis; chorismate from D-erythrose 4-phosphate and phosphoenolpyruvate: step 4/7. It functions in the pathway metabolic intermediate biosynthesis; chorismate biosynthesis; chorismate from D-erythrose 4-phosphate and phosphoenolpyruvate: step 5/7. Its pathway is metabolic intermediate biosynthesis; chorismate biosynthesis; chorismate from D-erythrose 4-phosphate and phosphoenolpyruvate: step 6/7. The AROM polypeptide catalyzes 5 consecutive enzymatic reactions in prechorismate polyaromatic amino acid biosynthesis. The protein is Pentafunctional AROM polypeptide of Ajellomyces capsulatus (strain NAm1 / WU24) (Darling's disease fungus).